A 503-amino-acid chain; its full sequence is MAGQRVRTRFAPSPTGYLHVGGLRTALYNYLFAKRMNGEFVIRIEDTDQSRKVEDAEKNLISTLEWAGIIADESPMHGGNYGPYVQSQRLDIYKKYCQQLLDDKNAYYCFSTSEELEENRQLQLKQGLQPKYNRKWLPEDMGGSMPQSEIKKKLDEGVPYVVRMKVPDYVSVWFEDVIRGPIEFDSATIDDQVLMKSDGFPTYHFASVIDDHLMEFTHIIRGEEWLPSMPKHLLLYEFFGWEPPKFAHLPLLLNPDRSKLSKRQGDVAVEDYVRKGYSSEAIVNFVALLGWNEGEGSEQEVFSMDELIEKFSLERVGKAGAVFNVDKLSWLEKQYIKTRPVDVIVEGIKPVLNEALAQRSPEMSVEWITSDDYLAKVVDLMRERVNFEHEFVTFSSYFFFEPESYEEDAVAKRWRPDMPELLGEFSKLLEANDDFTAENIEAELKAFVAPKGLKPAVIIHPLRLVVSGVSFGPSLYHMLEVLGKETVLRRIARGIERISIPEA.

A 'HIGH' region motif is present at residues 12 to 22; that stretch reads PSPTGYLHVGG. The 'KMSKS' region signature appears at 259–263; the sequence is KLSKR. Lys262 is an ATP binding site.

The protein belongs to the class-I aminoacyl-tRNA synthetase family. Glutamate--tRNA ligase type 1 subfamily. In terms of assembly, monomer.

The protein localises to the cytoplasm. The enzyme catalyses tRNA(Glu) + L-glutamate + ATP = L-glutamyl-tRNA(Glu) + AMP + diphosphate. Its function is as follows. Catalyzes the attachment of glutamate to tRNA(Glu) in a two-step reaction: glutamate is first activated by ATP to form Glu-AMP and then transferred to the acceptor end of tRNA(Glu). In Chlorobaculum parvum (strain DSM 263 / NCIMB 8327) (Chlorobium vibrioforme subsp. thiosulfatophilum), this protein is Glutamate--tRNA ligase.